Here is a 524-residue protein sequence, read N- to C-terminus: Metal transporter Nramp2 (524 aa).

Positions 34–58 are disordered; the sequence is AYDSDDKVSIAVSDSDSEDGGGGGG. Transmembrane regions (helical) follow at residues 70 to 90, 98 to 118, 155 to 175, 179 to 199, 207 to 227, 253 to 273, 295 to 315, 341 to 361, 389 to 409, 420 to 440, 457 to 477, and 486 to 506; these read LWRF…PGNL, AAAG…GALV, LALV…IKIL, TVPL…FLFL, LEAF…IMFG, AVGI…SALV, IESI…TTVF, YGTA…ASGQ, AMIT…FFDT, ALNV…ITLV, VISW…ILSF, and LVRS…VYLI.

It belongs to the NRAMP (TC 2.A.55) family.

It localises to the membrane. Probable metal transporter. This is Metal transporter Nramp2 (NRAMP2) from Oryza sativa subsp. japonica (Rice).